Reading from the N-terminus, the 291-residue chain is Ribonuclease Z (291 aa).

The Zn(2+) site is built by H61, H63, D65, H66, H133, D201, and H257. D65 acts as the Proton acceptor in catalysis.

It belongs to the RNase Z family. In terms of assembly, homodimer. Requires Zn(2+) as cofactor.

The enzyme catalyses Endonucleolytic cleavage of RNA, removing extra 3' nucleotides from tRNA precursor, generating 3' termini of tRNAs. A 3'-hydroxy group is left at the tRNA terminus and a 5'-phosphoryl group is left at the trailer molecule.. Zinc phosphodiesterase, which displays some tRNA 3'-processing endonuclease activity. Probably involved in tRNA maturation, by removing a 3'-trailer from precursor tRNA. This chain is Ribonuclease Z, found in Saccharolobus islandicus (strain L.S.2.15 / Lassen #1) (Sulfolobus islandicus).